Reading from the N-terminus, the 364-residue chain is Alpha-2-HS-glycoprotein (364 aa).

Positions 1–15 (MKSFLLLFCLAQLCS) form a signal peptide, or 17. Residues 27 to 133 (YKEPACDDPD…QFSVLFTKCD (107 aa)) form the Cystatin fetuin-A-type 1 domain. 6 disulfides stabilise this stretch: Cys-32-Cys-355, Cys-89-Cys-100, Cys-114-Cys-132, Cys-146-Cys-149, Cys-208-Cys-219, and Cys-230-Cys-248. A glycan (N-linked (GlcNAc...) asparagine) is linked at Asn-99. Ser-134, Ser-135, and Ser-138 each carry phosphoserine. The 113-residue stretch at 144–256 (KLCPDCPLLA…TCTLFQTQPV (113 aa)) folds into the Cystatin fetuin-A-type 2 domain. Residues Asn-156 and Asn-176 are each glycosylated (N-linked (GlcNAc...) asparagine). Residue Ser-301 is glycosylated (O-linked (GalNAc...) serine). At Thr-319 the chain carries Phosphothreonine. Phosphoserine is present on residues Ser-321, Ser-325, Ser-328, and Ser-330. Thr-339 is a glycosylation site (O-linked (GalNAc...) threonine).

It belongs to the fetuin family. Post-translationally, phosphorylated by FAM20C in the extracellular medium.

The protein resides in the secreted. The sequence is that of Alpha-2-HS-glycoprotein (AHSG) from Ovis aries (Sheep).